The following is a 358-amino-acid chain: Protein RecA (358 aa).

78 to 85 (GPESGGKT) contributes to the ATP binding site.

It belongs to the RecA family.

It is found in the cytoplasm. Functionally, can catalyze the hydrolysis of ATP in the presence of single-stranded DNA, the ATP-dependent uptake of single-stranded DNA by duplex DNA, and the ATP-dependent hybridization of homologous single-stranded DNAs. It interacts with LexA causing its activation and leading to its autocatalytic cleavage. The protein is Protein RecA of Deinococcus geothermalis (strain DSM 11300 / CIP 105573 / AG-3a).